We begin with the raw amino-acid sequence, 633 residues long: Sodium- and chloride-dependent glycine transporter 1 (633 aa).

Residues 1–30 are Cytoplasmic-facing; sequence MGLCVNGAVPSEATKKDENLKRGNWGNQIE. Helical transmembrane passes span 31-51, 58-78, and 113-133; these read FVLT…FPYL, GAFM…LFFM, and YIGI…FASM. Topologically, residues 134-208 are extracellular; that stretch reads NRVLPWTYCN…ISEDIGDFGE (75 aa). Asn158, Asn164, Asn173, and Asn179 each carry an N-linked (GlcNAc...) asparagine glycan. 9 helical membrane-spanning segments follow: residues 209–229, 238–258, 283–303, 330–350, 373–393, 429–449, 453–473, 493–513, and 533–553; these read VQLP…LCLI, VVYF…IRGI, VWGD…GGLI, SVYA…HLGV, LLPI…LLGL, IIGF…WLLL, YAAS…VMYI, LFFQ…ILIF, and ITIG…YAIF. Topologically, residues 554-633 are cytoplasmic; that stretch reads KIWCSEGDTF…GQAHTQDSKV (80 aa). Residues 588–633 are disordered; it reads RYAQMSSTRSESNPEAQPLNPEKMKEDLSLTIQGSNGQAHTQDSKV. 2 stretches are compositionally biased toward polar residues: residues 591–602 and 617–633; these read QMSSTRSESNPE and LTIQ…DSKV.

The protein belongs to the sodium:neurotransmitter symporter (SNF) (TC 2.A.22) family. SLC6A9 subfamily. As to expression, first expressed in early tailbud stage embryos in the midbrain and anterior spinal cord, and weakly in the hindbrain. By late tailbud stages, expression extends posteriorly in the spinal cord to appear in between somites. Expressed in the forebrain, retina, between the somites and in the blood islands by the swimming tadpole stages.

The protein localises to the cell membrane. The enzyme catalyses glycine(out) + chloride(out) + 2 Na(+)(out) = glycine(in) + chloride(in) + 2 Na(+)(in). Its function is as follows. Sodium- and chloride-dependent glycine transporter which is essential for regulating glycine concentrations at inhibitory glycinergic synapses. In Xenopus laevis (African clawed frog), this protein is Sodium- and chloride-dependent glycine transporter 1.